A 433-amino-acid polypeptide reads, in one-letter code: Ornithine decarboxylase, chloroplastic (433 aa).

At lysine 96 the chain carries N6-(pyridoxal phosphate)lysine. Residues serine 228, glycine 266, and 299–302 contribute to the pyridoxal 5'-phosphate site; that span reads EPGR. 342 to 343 is a binding site for substrate; it reads YD. Catalysis depends on cysteine 378, which acts as the Proton donor; shared with dimeric partner. Residue aspartate 379 participates in substrate binding. Tyrosine 407 is a binding site for pyridoxal 5'-phosphate.

The protein belongs to the Orn/Lys/Arg decarboxylase class-II family. In terms of assembly, homodimer. Only the dimer is catalytically active, as the active sites are constructed of residues from both monomers. Requires pyridoxal 5'-phosphate as cofactor.

The protein localises to the plastid. It localises to the chloroplast. It catalyses the reaction L-ornithine + H(+) = putrescine + CO2. The protein operates within alkaloid biosynthesis; nicotine biosynthesis. Its pathway is amine and polyamine biosynthesis; putrescine biosynthesis via L-ornithine pathway; putrescine from L-ornithine: step 1/1. Involved in the biosynthesis of pyridine alkaloid natural products, leading mainly to the production of anabasine, anatabine, nicotine and nornicotine, effective deterrents against herbivores with antiparasitic and pesticide properties (neurotoxins); nornicotine serves as the precursor in the synthesis of the carcinogen compound N'-nitrosonornicotine (NNN). Catalyzes the first and rate-limiting step of polyamine biosynthesis that converts ornithine into putrescine, which is the precursor for the polyamines, spermidine and spermine. Polyamines are essential for cell proliferation and are implicated in cellular processes, ranging from DNA replication to apoptosis. In Nicotiana glauca (Glaucous tobacco), this protein is Ornithine decarboxylase, chloroplastic.